Consider the following 228-residue polypeptide: UPF0758 protein Reut_A2732 (228 aa).

One can recognise an MPN domain in the interval 102–224 (GLDSPAAVRS…VHSFAEHGEL (123 aa)). Zn(2+) is bound by residues His173, His175, and Asp186. The short motif at 173 to 186 (HNHPSGCCTPSQSD) is the JAMM motif element.

The protein belongs to the UPF0758 family.

The sequence is that of UPF0758 protein Reut_A2732 from Cupriavidus pinatubonensis (strain JMP 134 / LMG 1197) (Cupriavidus necator (strain JMP 134)).